A 256-amino-acid chain; its full sequence is H-2 class II histocompatibility antigen, A-B alpha chain (256 aa).

The signal sequence occupies residues 1-23 (MPRSRALILGVLALTTMLSLCGG). The tract at residues 24–111 (EDDIEADHVG…KRSNSTPATN (88 aa)) is alpha-1. The Extracellular portion of the chain corresponds to 24–218 (EDDIEADHVG…IPAPMSELTE (195 aa)). Residues 112 to 205 (EAPQATVFPK…GLEEPVLKHW (94 aa)) form an alpha-2 region. Positions 114 to 206 (PQATVFPKSP…LEEPVLKHWE (93 aa)) constitute an Ig-like C1-type domain. Residues C134 and C190 are joined by a disulfide bond. A glycan (N-linked (GlcNAc...) asparagine) is linked at N145. A connecting peptide region spans residues 206–218 (EPEIPAPMSELTE). The chain crosses the membrane as a helical span at residues 219–244 (TVVCALGLSVGLVGIVVGTIFIIQGL). Over 245-256 (RSGGTSRHPGPL) the chain is Cytoplasmic.

This sequence belongs to the MHC class II family.

It is found in the membrane. The chain is H-2 class II histocompatibility antigen, A-B alpha chain (H2-Aa) from Mus musculus (Mouse).